A 187-amino-acid chain; its full sequence is Elongation factor P (187 aa).

The protein belongs to the elongation factor P family.

The protein localises to the cytoplasm. It participates in protein biosynthesis; polypeptide chain elongation. Its function is as follows. Involved in peptide bond synthesis. Stimulates efficient translation and peptide-bond synthesis on native or reconstituted 70S ribosomes in vitro. Probably functions indirectly by altering the affinity of the ribosome for aminoacyl-tRNA, thus increasing their reactivity as acceptors for peptidyl transferase. This Frankia casuarinae (strain DSM 45818 / CECT 9043 / HFP020203 / CcI3) protein is Elongation factor P.